Reading from the N-terminus, the 675-residue chain is Methionine--tRNA ligase (675 aa).

Positions 15–25 (PYANGPIHLGH) match the 'HIGH' region motif. Residues Cys146, Cys149, Cys159, and Cys162 each coordinate Zn(2+). The 'KMSKS' region signature appears at 332–336 (KMSKS). An ATP-binding site is contributed by Lys335. The tRNA-binding domain maps to 574-675 (DFAKIDLRVA…AGAKPGMRVK (102 aa)).

This sequence belongs to the class-I aminoacyl-tRNA synthetase family. MetG type 1 subfamily. Homodimer. Requires Zn(2+) as cofactor.

It is found in the cytoplasm. It catalyses the reaction tRNA(Met) + L-methionine + ATP = L-methionyl-tRNA(Met) + AMP + diphosphate. Its function is as follows. Is required not only for elongation of protein synthesis but also for the initiation of all mRNA translation through initiator tRNA(fMet) aminoacylation. This is Methionine--tRNA ligase from Shewanella amazonensis (strain ATCC BAA-1098 / SB2B).